Here is a 429-residue protein sequence, read N- to C-terminus: Tol-Pal system protein TolB (429 aa).

Positions 1–21 are cleaved as a signal peptide; the sequence is MKPVFKMLLSLLILWTSLLHA.

The protein belongs to the TolB family. As to quaternary structure, the Tol-Pal system is composed of five core proteins: the inner membrane proteins TolA, TolQ and TolR, the periplasmic protein TolB and the outer membrane protein Pal. They form a network linking the inner and outer membranes and the peptidoglycan layer.

The protein localises to the periplasm. Functionally, part of the Tol-Pal system, which plays a role in outer membrane invagination during cell division and is important for maintaining outer membrane integrity. TolB occupies a key intermediary position in the Tol-Pal system because it communicates directly with both membrane-embedded components, Pal in the outer membrane and TolA in the inner membrane. The chain is Tol-Pal system protein TolB from Hamiltonella defensa subsp. Acyrthosiphon pisum (strain 5AT).